A 1272-amino-acid chain; its full sequence is Presporeless protein A (1272 aa).

The Nuclear localization signal signature appears at 146 to 161 (KDKRIKPIDPKKKISR). Disordered regions lie at residues 369–403 (ASTINDGEEEDDDDDDNDVDGNDDDNNKEKVDDTS) and 468–490 (STSSTNTASSTRSKASSNSNQLK). Acidic residues predominate over residues 374-392 (DGEEEDDDDDDNDVDGNDD). Residues 393–403 (DNNKEKVDDTS) show a composition bias toward basic and acidic residues. The segment covering 468 to 487 (STSSTNTASSTRSKASSNSN) has biased composition (low complexity).

The protein resides in the nucleus. Functionally, functions autonomously, very early in the prespore pathway, to control prespore cell differentiation, maybe at the level of transcription. Also required for proper aggregation. The sequence is that of Presporeless protein A (pslA) from Dictyostelium discoideum (Social amoeba).